Consider the following 216-residue polypeptide: MOB kinase activator 3B (216 aa).

The Zn(2+) site is built by C82, C87, H164, and H169.

The protein belongs to the MOB1/phocein family.

Modulates LATS1 expression in the Hippo signaling pathway which plays a pivotal role in organ size control and tumor suppression by restricting proliferation and promoting apoptosis. The polypeptide is MOB kinase activator 3B (Homo sapiens (Human)).